The chain runs to 524 residues: Magnesium/proton exchanger 2 (524 aa).

11 helical membrane-spanning segments follow: residues 28–48 (GVRAFIYTVVLAYCFIGLSAI), 88–108 (IADVALLAFGTSFPQISLATI), 125–145 (GTLVGSAAFDLFPIHAVCVVM), 157–177 (LGVWLVELFWSFWAYIWLYII), 185–205 (VITLWEALLTVLQYGLLLLHA), 325–345 (VIGISWNLIIAPWKMLFAFIP), 349–369 (IAHGWIAFICSLIFISGIAYG), 377–397 (ISCVTGVSPYVIAFTALAAGT), 430–450 (IYVGIGVPWLVDTMYNYLFVY), 462–482 (LSFSLLVFFATSFGCITVLVL), and 496–516 (MWAWATSVYFMILWVVFVVLS).

The protein belongs to the Ca(2+):cation antiporter (CaCA) (TC 2.A.19) family. MHX subfamily.

It localises to the vacuole membrane. Vacuolar transporter that exchanges protons with Mg(2+), Zn(2+) and Fe(2+) ions. May control the partitioning of Mg(2+) and Zn(2+) between plant organs. The sequence is that of Magnesium/proton exchanger 2 (MHX2) from Oryza sativa subsp. japonica (Rice).